A 416-amino-acid chain; its full sequence is Formyl-CoA:oxalate CoA-transferase (416 aa).

CoA is bound by residues 17–18, Arg38, 72–75, 96–98, His104, and 137–140; these read QS, LNTK, NFH, and KAYE. Catalysis depends on Asp169, which acts as the Nucleophile. 248–250 is a binding site for substrate; sequence GGQ. 273-275 is a binding site for CoA; sequence QEQ.

This sequence belongs to the CoA-transferase III family. Frc subfamily. In terms of assembly, homodimer.

It carries out the reaction formyl-CoA + oxalate = oxalyl-CoA + formate. Its pathway is metabolic intermediate degradation; oxalate degradation; CO(2) and formate from oxalate: step 1/2. Functionally, involved in the catabolism of oxalate and in the adapatation to low pH via the induction of the oxalate-dependent acid tolerance response (ATR). Catalyzes the transfer of the CoA moiety from formyl-CoA to oxalate. This is Formyl-CoA:oxalate CoA-transferase from Escherichia coli O81 (strain ED1a).